The chain runs to 397 residues: Putative F-box protein At1g26510 (397 aa).

A disordered region spans residues 1-23 (MRTRSKKTKTVNNNNDLQKSEEK). The F-box domain maps to 24–71 (QKFDQLPLDLEIEMFRRLPLKSVARFLTLSKSCATTIRSPSFITSFPS).

This is Putative F-box protein At1g26510 from Arabidopsis thaliana (Mouse-ear cress).